Reading from the N-terminus, the 448-residue chain is Probable glycine dehydrogenase (decarboxylating) subunit 1 (448 aa).

This sequence belongs to the GcvP family. N-terminal subunit subfamily. The glycine cleavage system is composed of four proteins: P, T, L and H. In this organism, the P 'protein' is a heterodimer of two subunits.

It catalyses the reaction N(6)-[(R)-lipoyl]-L-lysyl-[glycine-cleavage complex H protein] + glycine + H(+) = N(6)-[(R)-S(8)-aminomethyldihydrolipoyl]-L-lysyl-[glycine-cleavage complex H protein] + CO2. The glycine cleavage system catalyzes the degradation of glycine. The P protein binds the alpha-amino group of glycine through its pyridoxal phosphate cofactor; CO(2) is released and the remaining methylamine moiety is then transferred to the lipoamide cofactor of the H protein. The polypeptide is Probable glycine dehydrogenase (decarboxylating) subunit 1 (Shouchella clausii (strain KSM-K16) (Alkalihalobacillus clausii)).